Reading from the N-terminus, the 592-residue chain is Potassium-transporting ATPase potassium-binding subunit (592 aa).

Helical transmembrane passes span 7-27 (ILLGIFLVVLLLTVKPLGTYI), 60-80 (LKYACAILLFNVLGVLAVYAL), 132-152 (ALAVQNFFSAATGIVVVIALI), 175-195 (LHVLLPISIIYAVFLTGQGVI), 279-299 (LSNFIQMLSIFLIPAALCFTF), 310-330 (WAVLAAMTLMFVALAYTAMHF), 409-429 (GLYGMLVFAIMAVFIAGLMIG), 449-469 (IAILVTPLLVLVGTAIAVMLA), 513-533 (VMLGIAMWFGRFGVIVPVLAI), and 556-576 (LFVTLLIGTVLLVGLLNYVPA).

The protein belongs to the KdpA family. The system is composed of three essential subunits: KdpA, KdpB and KdpC.

The protein localises to the cell inner membrane. In terms of biological role, part of the high-affinity ATP-driven potassium transport (or Kdp) system, which catalyzes the hydrolysis of ATP coupled with the electrogenic transport of potassium into the cytoplasm. This subunit binds the periplasmic potassium ions and delivers the ions to the membrane domain of KdpB through an intramembrane tunnel. The sequence is that of Potassium-transporting ATPase potassium-binding subunit from Dechloromonas aromatica (strain RCB).